The sequence spans 128 residues: Glycine cleavage system H protein (128 aa).

Positions 24–106 (VYSVGITEHA…YTDGWLFSIK (83 aa)) constitute a Lipoyl-binding domain. Lysine 65 carries the post-translational modification N6-lipoyllysine.

This sequence belongs to the GcvH family. In terms of assembly, the glycine cleavage system is composed of four proteins: P, T, L and H. The cofactor is (R)-lipoate.

Its function is as follows. The glycine cleavage system catalyzes the degradation of glycine. The H protein shuttles the methylamine group of glycine from the P protein to the T protein. The polypeptide is Glycine cleavage system H protein (Yersinia pseudotuberculosis serotype O:1b (strain IP 31758)).